A 123-amino-acid polypeptide reads, in one-letter code: Ribosome-binding factor A (123 aa).

This sequence belongs to the RbfA family. In terms of assembly, monomer. Binds 30S ribosomal subunits, but not 50S ribosomal subunits or 70S ribosomes.

Its subcellular location is the cytoplasm. Its function is as follows. One of several proteins that assist in the late maturation steps of the functional core of the 30S ribosomal subunit. Associates with free 30S ribosomal subunits (but not with 30S subunits that are part of 70S ribosomes or polysomes). Required for efficient processing of 16S rRNA. May interact with the 5'-terminal helix region of 16S rRNA. The polypeptide is Ribosome-binding factor A (Chlamydia trachomatis serovar A (strain ATCC VR-571B / DSM 19440 / HAR-13)).